The following is a 303-amino-acid chain: Exosome complex component RRP4 homolog (303 aa).

The KH domain occupies 175–213 (GILIKVPPHLIKKSKKHFHTLPYGMAVIIGCNGSVWVTP).

This sequence belongs to the RRP4 family. Component of the RNA exosome complex. As to expression, ubiquitously expressed.

It localises to the nucleus. It is found in the nucleolus. The protein resides in the nucleoplasm. Non-catalytic component of the RNA exosome complex which has 3'-&gt;5' exoribonuclease activity and participates in a multitude of cellular RNA processing and degradation events. Involved in regulation of antisense ribosomal siRNA production. Involved in response to cold-warm shock. The polypeptide is Exosome complex component RRP4 homolog (Caenorhabditis elegans).